The sequence spans 107 residues: Large ribosomal subunit protein eL33 (107 aa).

It belongs to the eukaryotic ribosomal protein eL33 family. Component of the large ribosomal subunit. Mature ribosomes consist of a small (40S) and a large (60S) subunit. The 40S subunit contains about 32 different proteins and 1 molecule of RNA (18S). The 60S subunit contains 45 different proteins and 3 molecules of RNA (25S, 5.8S and 5S).

The protein localises to the cytoplasm. Component of the ribosome, a large ribonucleoprotein complex responsible for the synthesis of proteins in the cell. The small ribosomal subunit (SSU) binds messenger RNAs (mRNAs) and translates the encoded message by selecting cognate aminoacyl-transfer RNA (tRNA) molecules. The large subunit (LSU) contains the ribosomal catalytic site termed the peptidyl transferase center (PTC), which catalyzes the formation of peptide bonds, thereby polymerizing the amino acids delivered by tRNAs into a polypeptide chain. The nascent polypeptides leave the ribosome through a tunnel in the LSU and interact with protein factors that function in enzymatic processing, targeting, and the membrane insertion of nascent chains at the exit of the ribosomal tunnel. This Candida albicans (strain SC5314 / ATCC MYA-2876) (Yeast) protein is Large ribosomal subunit protein eL33.